Consider the following 428-residue polypeptide: Enolase (428 aa).

A (2R)-2-phosphoglycerate-binding site is contributed by Q163. E205 serves as the catalytic Proton donor. Mg(2+) is bound by residues D242, E286, and D313. Positions 338, 367, 368, and 389 each coordinate (2R)-2-phosphoglycerate. The active-site Proton acceptor is K338.

It belongs to the enolase family. Mg(2+) serves as cofactor.

The protein localises to the cytoplasm. It localises to the secreted. It is found in the cell surface. The enzyme catalyses (2R)-2-phosphoglycerate = phosphoenolpyruvate + H2O. The protein operates within carbohydrate degradation; glycolysis; pyruvate from D-glyceraldehyde 3-phosphate: step 4/5. Functionally, catalyzes the reversible conversion of 2-phosphoglycerate (2-PG) into phosphoenolpyruvate (PEP). It is essential for the degradation of carbohydrates via glycolysis. In Lactobacillus acidophilus (strain ATCC 700396 / NCK56 / N2 / NCFM), this protein is Enolase.